Here is a 230-residue protein sequence, read N- to C-terminus: 2-C-methyl-D-erythritol 4-phosphate cytidylyltransferase (230 aa).

It belongs to the IspD/TarI cytidylyltransferase family. IspD subfamily.

The catalysed reaction is 2-C-methyl-D-erythritol 4-phosphate + CTP + H(+) = 4-CDP-2-C-methyl-D-erythritol + diphosphate. It participates in isoprenoid biosynthesis; isopentenyl diphosphate biosynthesis via DXP pathway; isopentenyl diphosphate from 1-deoxy-D-xylulose 5-phosphate: step 2/6. Catalyzes the formation of 4-diphosphocytidyl-2-C-methyl-D-erythritol from CTP and 2-C-methyl-D-erythritol 4-phosphate (MEP). The sequence is that of 2-C-methyl-D-erythritol 4-phosphate cytidylyltransferase from Synechocystis sp. (strain ATCC 27184 / PCC 6803 / Kazusa).